The primary structure comprises 228 residues: Response regulator SaeR (228 aa).

The Response regulatory domain occupies 3 to 116 (HLLIVDDEQD…ELVLRINNLL (114 aa)). Residue Asp51 is modified to 4-aspartylphosphate. The ompR/PhoB-type DNA-binding region spans 127–226 (VEQLSFDELT…VWGLGYKFER (100 aa)).

Phosphorylated by SaeS.

The protein localises to the cytoplasm. Member of the two-component regulatory system SaeR/SaeS involved in the regulation of staphylococcal virulence factors in a strain-dependent fashion. Probably functions as a transcriptional regulator via a specific DNA-binding domain, recognizing motifs near the promoter sequences of target genes. The protein is Response regulator SaeR (saeR) of Staphylococcus aureus (strain USA300).